Consider the following 160-residue polypeptide: Transcriptional regulator MraZ (160 aa).

SpoVT-AbrB domains lie at 5-51 and 80-123; these read TFEK…GKAL and MAKL…EREA.

Belongs to the MraZ family. As to quaternary structure, forms oligomers.

Its subcellular location is the cytoplasm. It is found in the nucleoid. This is Transcriptional regulator MraZ from Phenylobacterium zucineum (strain HLK1).